The chain runs to 321 residues: Phospho-N-acetylmuramoyl-pentapeptide-transferase (321 aa).

The next 10 membrane-spanning stretches (helical) occupy residues 1–21 (MLFILAVIALLITFILVPILI), 50–70 (MGGLTFLISIIITSIIAIFFV), 76–96 (IILLLFVTIGFGLIGFIDDYI), 112–132 (FLAQIAIAVVFFLLSDVFHLV), 140–160 (IPFTNISIPLSFAYVIFIVFW), 176–196 (GLATGLSIIGFTMYAIMSFVL), 200–220 (AIGAFCIIMIFALLGFLPYNL), 225–245 (VFMGDTGSLALGGIFATISIM), 250–270 (LSLLLIGLVFVIETASVMLQV), and 300–320 (VVTVFWTAGLISGLIGLWIGV).

This sequence belongs to the glycosyltransferase 4 family. MraY subfamily. It depends on Mg(2+) as a cofactor.

It localises to the cell membrane. It carries out the reaction UDP-N-acetyl-alpha-D-muramoyl-L-alanyl-gamma-D-glutamyl-L-lysyl-D-alanyl-D-alanine + di-trans,octa-cis-undecaprenyl phosphate = Mur2Ac(oyl-L-Ala-gamma-D-Glu-L-Lys-D-Ala-D-Ala)-di-trans,octa-cis-undecaprenyl diphosphate + UMP. Its pathway is cell wall biogenesis; peptidoglycan biosynthesis. In terms of biological role, catalyzes the initial step of the lipid cycle reactions in the biosynthesis of the cell wall peptidoglycan: transfers peptidoglycan precursor phospho-MurNAc-pentapeptide from UDP-MurNAc-pentapeptide onto the lipid carrier undecaprenyl phosphate, yielding undecaprenyl-pyrophosphoryl-MurNAc-pentapeptide, known as lipid I. This Staphylococcus haemolyticus (strain JCSC1435) protein is Phospho-N-acetylmuramoyl-pentapeptide-transferase.